The chain runs to 260 residues: Flap endonuclease Xni (260 aa).

D105 is a binding site for Mg(2+). Residues 164–259 (NQFLDLMALA…VNGPANTQQA (96 aa)) form the 5'-3' exonuclease domain. 5 residues coordinate K(+): L172, A173, P181, I183, and I186. The tract at residues 185–190 (GIGPKS) is interaction with DNA.

This sequence belongs to the Xni family. Mg(2+) serves as cofactor. K(+) is required as a cofactor.

Has flap endonuclease activity. During DNA replication, flap endonucleases cleave the 5'-overhanging flap structure that is generated by displacement synthesis when DNA polymerase encounters the 5'-end of a downstream Okazaki fragment. This is Flap endonuclease Xni from Shewanella sp. (strain MR-4).